We begin with the raw amino-acid sequence, 136 residues long: Large ribosomal subunit protein uL16c (136 aa).

It belongs to the universal ribosomal protein uL16 family. Part of the 50S ribosomal subunit.

It is found in the plastid. Its subcellular location is the chloroplast. The protein is Large ribosomal subunit protein uL16c of Zea mays (Maize).